The sequence spans 235 residues: Meiotically up-regulated gene 123 protein (235 aa).

Residues 1 to 14 (MERLATRSSHDDPY) are compositionally biased toward basic and acidic residues. Disordered regions lie at residues 1–34 (MERL…SNGS), 58–83 (PLHS…GGMR), and 169–235 (SRAD…FDSD). Residues 15–34 (SRSSLPTSNAINSNHESNGS) show a composition bias toward polar residues. The segment covering 61 to 77 (SSPSIKSSSQNGKSSSK) has biased composition (low complexity). Positions 176–202 (ETTQSDGFESRSGSPTHDIQSYLVNRR) are enriched in polar residues. 3 positions are modified to phosphoserine: S180, S187, and S189. T191 carries the post-translational modification Phosphothreonine.

It localises to the cytoplasm. The protein resides in the nucleus. Its function is as follows. Involved in sporulation and has a role in meiosis. In Schizosaccharomyces pombe (strain 972 / ATCC 24843) (Fission yeast), this protein is Meiotically up-regulated gene 123 protein (mug123).